We begin with the raw amino-acid sequence, 78 residues long: Gas vesicle protein A (78 aa).

Positions 9–19 are alpha helix 1; that stretch reads LAEVLDRVLDK. The segment at 23-31 is beta-strand 1; sequence VDVWARISL. Residues 32 to 34 are beta turn; the sequence is VGI. Residues 35–43 are beta-strand 2; that stretch reads EILTVEARV. The tract at residues 48 to 67 is alpha helix 2; it reads VDTFLHYAEEIAKIEQAELT.

Belongs to the gas vesicle GvpA family. In terms of assembly, the gas vesicle shell is 2 nm thick and consists of a single layer of this protein. It forms helical ribs nearly perpendicular to the long axis of the vesicle. Modeled as antiparallel homodimers.

Its subcellular location is the gas vesicle shell. Functionally, gas vesicles are hollow, gas filled proteinaceous nanostructures found in some microorganisms. During planktonic growth they allow positioning of the organism at a favorable depth for light or nutrient acquisition. GvpA forms the protein shell. This gene replaces p-gvpA of H.salinarum very poorly, only about 1% of GVs are formed; the few gas vesicles formed are quite strong with a very high critical collapse pressure (CCP) of 0.213 MPa. Its function is as follows. Expression of a 9.5 kb mc-vac DNA fragment containing 2 divergently transcribed regions (gvpD-gvpE-gvpF-gvpG-gvpH-gvpI-gvpJ-gvpK-gvpL-gvpM and gvpA-gvpC-gvpN-gvpO) allows H.volcanii to produce gas vesicles. In Haloferax mediterranei (strain ATCC 33500 / DSM 1411 / JCM 8866 / NBRC 14739 / NCIMB 2177 / R-4) (Halobacterium mediterranei), this protein is Gas vesicle protein A.